Consider the following 354-residue polypeptide: Holliday junction branch migration complex subunit RuvB (354 aa).

The tract at residues 1-22 is disordered; it reads MTLQTDDFAPAPARRVVSAAPA. The interval 5–194 is large ATPase domain (RuvB-L); the sequence is TDDFAPAPAR…FGIVARLEFY (190 aa). Positions 9–22 are enriched in low complexity; the sequence is APAPARRVVSAAPA. ATP is bound by residues L33, R34, G75, K78, T79, T80, 141-143, R184, Y194, and R231; that span reads EDY. Mg(2+) is bound at residue T79. Positions 195–265 are small ATPAse domain (RuvB-S); the sequence is SAQELARIVK…IAERALAMLD (71 aa). Residues 268–354 form a head domain (RuvB-H) region; the sequence is PEGLDVMDRK…GAQAPGLFAV (87 aa). DNA-binding residues include R323 and R328.

This sequence belongs to the RuvB family. Homohexamer. Forms an RuvA(8)-RuvB(12)-Holliday junction (HJ) complex. HJ DNA is sandwiched between 2 RuvA tetramers; dsDNA enters through RuvA and exits via RuvB. An RuvB hexamer assembles on each DNA strand where it exits the tetramer. Each RuvB hexamer is contacted by two RuvA subunits (via domain III) on 2 adjacent RuvB subunits; this complex drives branch migration. In the full resolvosome a probable DNA-RuvA(4)-RuvB(12)-RuvC(2) complex forms which resolves the HJ.

The protein localises to the cytoplasm. The catalysed reaction is ATP + H2O = ADP + phosphate + H(+). Its function is as follows. The RuvA-RuvB-RuvC complex processes Holliday junction (HJ) DNA during genetic recombination and DNA repair, while the RuvA-RuvB complex plays an important role in the rescue of blocked DNA replication forks via replication fork reversal (RFR). RuvA specifically binds to HJ cruciform DNA, conferring on it an open structure. The RuvB hexamer acts as an ATP-dependent pump, pulling dsDNA into and through the RuvAB complex. RuvB forms 2 homohexamers on either side of HJ DNA bound by 1 or 2 RuvA tetramers; 4 subunits per hexamer contact DNA at a time. Coordinated motions by a converter formed by DNA-disengaged RuvB subunits stimulates ATP hydrolysis and nucleotide exchange. Immobilization of the converter enables RuvB to convert the ATP-contained energy into a lever motion, pulling 2 nucleotides of DNA out of the RuvA tetramer per ATP hydrolyzed, thus driving DNA branch migration. The RuvB motors rotate together with the DNA substrate, which together with the progressing nucleotide cycle form the mechanistic basis for DNA recombination by continuous HJ branch migration. Branch migration allows RuvC to scan DNA until it finds its consensus sequence, where it cleaves and resolves cruciform DNA. In Verminephrobacter eiseniae (strain EF01-2), this protein is Holliday junction branch migration complex subunit RuvB.